A 490-amino-acid polypeptide reads, in one-letter code: Betaine aldehyde dehydrogenase (490 aa).

K(+)-binding residues include serine 26, isoleucine 27, and aspartate 93. 150 to 152 contributes to the NAD(+) binding site; sequence GAW. Lysine 162 (charge relay system) is an active-site residue. NAD(+) is bound by residues 176 to 179 and 230 to 233; these read KPSE and GVET. Leucine 246 serves as a coordination point for K(+). Glutamate 252 acts as the Proton acceptor in catalysis. NAD(+)-binding residues include glycine 254, cysteine 286, and glutamate 387. Cysteine 286 serves as the catalytic Nucleophile. Position 286 is a cysteine sulfenic acid (-SOH) (cysteine 286). Residues lysine 457 and glycine 460 each coordinate K(+). Glutamate 464 acts as the Charge relay system in catalysis.

Belongs to the aldehyde dehydrogenase family. As to quaternary structure, dimer of dimers. K(+) serves as cofactor.

It catalyses the reaction betaine aldehyde + NAD(+) + H2O = glycine betaine + NADH + 2 H(+). It functions in the pathway amine and polyamine biosynthesis; betaine biosynthesis via choline pathway; betaine from betaine aldehyde: step 1/1. Functionally, involved in the biosynthesis of the osmoprotectant glycine betaine. Catalyzes the irreversible oxidation of betaine aldehyde to the corresponding acid. The polypeptide is Betaine aldehyde dehydrogenase (Acinetobacter baumannii (strain AB307-0294)).